Reading from the N-terminus, the 127-residue chain is Major sperm protein 10/36/56/76 (127 aa).

Ala-2 is modified (N-acetylalanine). The region spanning 9–126 (DIQTQPNAKI…RRKNLPIEYN (118 aa)) is the MSP domain.

Sperm.

It localises to the cell projection. Its subcellular location is the pseudopodium. It is found in the cytoplasm. The protein resides in the cytoskeleton. In terms of biological role, central component in molecular interactions underlying sperm crawling. Forms an extensive filament system that extends from sperm villipoda, along the leading edge of the pseudopod. In Caenorhabditis elegans, this protein is Major sperm protein 10/36/56/76 (msp-10).